The chain runs to 97 residues: Cornifin (97 aa).

The interval 1-42 (MSSQQQKQPCTPPPQPQQQQVKQPCQPPPQEPCVPKTKEPCH) is disordered. Position 2 is an N-acetylserine (Ser-2). A run of 9 repeats spans residues 3 to 14 (SQQQKQPCTPPP), 18 to 29 (QQQVKQPCQPPP), 31 to 38 (EPCVPKTK), 39 to 46 (EPCHPKVP), 47 to 54 (EPCQPKVP), 55 to 62 (EPCQPKVP), 63 to 70 (EPCHPKVP), 71 to 78 (EPCQPKVP), and 79 to 85 (EPCPSPV). Residues 3 to 29 (SQQQKQPCTPPPQPQQQQVKQPCQPPP) are 2 X 12 AA approximate repeats. The 7 X 8 AA approximate tandem repeats stretch occupies residues 31-85 (EPCVPKTKEPCHPKVPEPCQPKVPEPCQPKVPEPCHPKVPEPCQPKVPEPCPSPV).

The protein belongs to the cornifin (SPRR) family. As to expression, not detected in normal lung tissue but seen in tumor tissues. Cells around the keratin pearls contain high levels.

The protein resides in the cytoplasm. In terms of biological role, cross-linked envelope protein of keratinocytes. It is a keratinocyte protein that first appears in the cell cytosol, but ultimately becomes cross-linked to membrane proteins by transglutaminase. All that results in the formation of an insoluble envelope beneath the plasma membrane. In Sus scrofa (Pig), this protein is Cornifin (SPRP).